A 222-amino-acid chain; its full sequence is MRIHDIDPDNRPRERFLRSGKEALSPAELLALILRSGTPNLNIIDTCNQLIAEHSLEGLADLSLHELQKIPGIGQAKAMQIAAVFELHRRIRFAKNINRKIQGAQDVFEYMQGRIPDESKEHLFVLFLNTKNRILSHESVTVGTLTSSLIHPREIFKAAIRQSAHSIILVHNHPSGDVQPSNADKQVTSILKKSGDLLQIALLDHVIVGNDDWFSFRDHSLL.

The MPN domain occupies lysine 100 to leucine 222. Residues histidine 171, histidine 173, and aspartate 184 each contribute to the Zn(2+) site. The short motif at histidine 171–aspartate 184 is the JAMM motif element.

Belongs to the UPF0758 family.

This chain is UPF0758 protein Cpar_0627, found in Chlorobaculum parvum (strain DSM 263 / NCIMB 8327) (Chlorobium vibrioforme subsp. thiosulfatophilum).